The following is a 197-amino-acid chain: 3-isopropylmalate dehydratase small subunit (197 aa).

Belongs to the LeuD family. LeuD type 1 subfamily. As to quaternary structure, heterodimer of LeuC and LeuD.

The enzyme catalyses (2R,3S)-3-isopropylmalate = (2S)-2-isopropylmalate. Its pathway is amino-acid biosynthesis; L-leucine biosynthesis; L-leucine from 3-methyl-2-oxobutanoate: step 2/4. Catalyzes the isomerization between 2-isopropylmalate and 3-isopropylmalate, via the formation of 2-isopropylmaleate. The sequence is that of 3-isopropylmalate dehydratase small subunit from Azobacteroides pseudotrichonymphae genomovar. CFP2.